The primary structure comprises 240 residues: Uridylate kinase (240 aa).

ATP is bound at residue 13-16 (KFSG). Position 55 (G55) interacts with UMP. ATP is bound by residues G56 and R60. UMP is bound by residues D76 and 137–144 (TGNPFFTT). Residues T164, Y170, and D173 each coordinate ATP.

The protein belongs to the UMP kinase family. As to quaternary structure, homohexamer.

The protein localises to the cytoplasm. The enzyme catalyses UMP + ATP = UDP + ADP. It functions in the pathway pyrimidine metabolism; CTP biosynthesis via de novo pathway; UDP from UMP (UMPK route): step 1/1. Inhibited by UTP. Functionally, catalyzes the reversible phosphorylation of UMP to UDP. This chain is Uridylate kinase, found in Helicobacter pylori (strain HPAG1).